The primary structure comprises 567 residues: tRNA(His) guanylyltransferase 1 (567 aa).

3 residues coordinate Mg(2+): Asp342, Gly343, and Asp389. GTP contacts are provided by residues 342–347 (DGCHFH) and 388–389 (SD). Glycyl lysine isopeptide (Lys-Gly) (interchain with G-Cter in ubiquitin) cross-links involve residues Lys397 and Lys403.

Belongs to the tRNA(His) guanylyltransferase family. The cofactor is Mg(2+).

The protein resides in the nucleus. It is found in the nucleoplasm. The enzyme catalyses a 5'-end ribonucleotide-tRNA(His) + GTP + ATP + H2O = a 5'-end phospho-guanosine-ribonucleotide-tRNA(His) + AMP + 2 diphosphate + H(+). Its function is as follows. Adds a GMP to the 5'-end of tRNA(His) after transcription and RNase P cleavage. The polypeptide is tRNA(His) guanylyltransferase 1 (THG1) (Arabidopsis thaliana (Mouse-ear cress)).